A 725-amino-acid polypeptide reads, in one-letter code: Catalase-peroxidase (725 aa).

A cross-link (tryptophyl-tyrosyl-methioninium (Trp-Tyr) (with M-237)) is located at residues 88–211 (WHSAGTYRIQ…LAASEMGLIY (124 aa)). H89 acts as the Proton acceptor in catalysis. A cross-link (tryptophyl-tyrosyl-methioninium (Tyr-Met) (with W-88)) is located at residues 211-237 (YVNPEGPGREPDPLKAAQQIRETFKRM). H252 is a heme b binding site.

It belongs to the peroxidase family. Peroxidase/catalase subfamily. As to quaternary structure, homodimer or homotetramer. Requires heme b as cofactor. Post-translationally, formation of the three residue Trp-Tyr-Met cross-link is important for the catalase, but not the peroxidase activity of the enzyme.

It catalyses the reaction H2O2 + AH2 = A + 2 H2O. The catalysed reaction is 2 H2O2 = O2 + 2 H2O. Bifunctional enzyme with both catalase and broad-spectrum peroxidase activity. The polypeptide is Catalase-peroxidase (Symbiobacterium thermophilum (strain DSM 24528 / JCM 14929 / IAM 14863 / T)).